A 98-amino-acid polypeptide reads, in one-letter code: Integration host factor subunit alpha (98 aa).

It belongs to the bacterial histone-like protein family. Heterodimer of an alpha and a beta chain.

This protein is one of the two subunits of integration host factor, a specific DNA-binding protein that functions in genetic recombination as well as in transcriptional and translational control. The protein is Integration host factor subunit alpha of Idiomarina loihiensis (strain ATCC BAA-735 / DSM 15497 / L2-TR).